We begin with the raw amino-acid sequence, 329 residues long: Phosphoenolpyruvate transferase (329 aa).

Asp-61 is a binding site for 7,8-didemethyl-8-hydroxy-5-deazariboflavin.

This sequence belongs to the CofD family. In terms of assembly, homodimer. Requires Mg(2+) as cofactor.

It carries out the reaction enolpyruvoyl-2-diphospho-5'-guanosine + 7,8-didemethyl-8-hydroxy-5-deazariboflavin = dehydro coenzyme F420-0 + GMP + H(+). The protein operates within cofactor biosynthesis; coenzyme F420 biosynthesis. Its function is as follows. Catalyzes the transfer of the phosphoenolpyruvate moiety from enoylpyruvoyl-2-diphospho-5'-guanosine (EPPG) to 7,8-didemethyl-8-hydroxy-5-deazariboflavin (FO) with the formation of dehydro coenzyme F420-0 and GMP. This chain is Phosphoenolpyruvate transferase, found in Mycobacterium marinum (strain ATCC BAA-535 / M).